The following is a 368-amino-acid chain: Protein RecA (368 aa).

An ATP-binding site is contributed by 72 to 79 (GNESSGKT).

The protein belongs to the RecA family.

Its subcellular location is the cytoplasm. In terms of biological role, can catalyze the hydrolysis of ATP in the presence of single-stranded DNA, the ATP-dependent uptake of single-stranded DNA by duplex DNA, and the ATP-dependent hybridization of homologous single-stranded DNAs. It interacts with LexA causing its activation and leading to its autocatalytic cleavage. This Petrotoga mobilis (strain DSM 10674 / SJ95) protein is Protein RecA.